We begin with the raw amino-acid sequence, 336 residues long: MATERLVAGNLHNEDQELELSLRPRCLAEYIGQEHVKETLGIFIQAARERGEALDHVLLYGPPGLGKTTLAGIIANELGVQLRVTSGPALERAGDLAAILTNLQPRDVLFIDEIHRLPRQVEEILYPAMEDFVLDIILGKGPGARSIRLDLPPFTLVGATTRAGLLSSPLRDRFGINSRLEFYQVAELEEIIRRAATILQVAIEPEGAREIARRARGTPRVANRLLKRVRDYAEIRAGGVITREVAREALELLQVDAAGLDSSDRRLLLTLIRKFNGGPVGLETLAAAISEEPDTIEDVYEPFLLQMGYLQRTPRGRVATPGAYAHLGIKPEDRLF.

The large ATPase domain (RuvB-L) stretch occupies residues 1–183 (MATERLVAGN…FGINSRLEFY (183 aa)). Residues leucine 22, arginine 23, glycine 64, lysine 67, threonine 68, threonine 69, 130-132 (EDF), arginine 173, tyrosine 183, and arginine 220 contribute to the ATP site. Position 68 (threonine 68) interacts with Mg(2+). The tract at residues 184 to 254 (QVAELEEIIR…VAREALELLQ (71 aa)) is small ATPAse domain (RuvB-S). The segment at 257–336 (AAGLDSSDRR…LGIKPEDRLF (80 aa)) is head domain (RuvB-H). The DNA site is built by arginine 312 and arginine 317.

Belongs to the RuvB family. As to quaternary structure, homohexamer. Forms an RuvA(8)-RuvB(12)-Holliday junction (HJ) complex. HJ DNA is sandwiched between 2 RuvA tetramers; dsDNA enters through RuvA and exits via RuvB. An RuvB hexamer assembles on each DNA strand where it exits the tetramer. Each RuvB hexamer is contacted by two RuvA subunits (via domain III) on 2 adjacent RuvB subunits; this complex drives branch migration. In the full resolvosome a probable DNA-RuvA(4)-RuvB(12)-RuvC(2) complex forms which resolves the HJ.

It localises to the cytoplasm. The catalysed reaction is ATP + H2O = ADP + phosphate + H(+). Its function is as follows. The RuvA-RuvB-RuvC complex processes Holliday junction (HJ) DNA during genetic recombination and DNA repair, while the RuvA-RuvB complex plays an important role in the rescue of blocked DNA replication forks via replication fork reversal (RFR). RuvA specifically binds to HJ cruciform DNA, conferring on it an open structure. The RuvB hexamer acts as an ATP-dependent pump, pulling dsDNA into and through the RuvAB complex. RuvB forms 2 homohexamers on either side of HJ DNA bound by 1 or 2 RuvA tetramers; 4 subunits per hexamer contact DNA at a time. Coordinated motions by a converter formed by DNA-disengaged RuvB subunits stimulates ATP hydrolysis and nucleotide exchange. Immobilization of the converter enables RuvB to convert the ATP-contained energy into a lever motion, pulling 2 nucleotides of DNA out of the RuvA tetramer per ATP hydrolyzed, thus driving DNA branch migration. The RuvB motors rotate together with the DNA substrate, which together with the progressing nucleotide cycle form the mechanistic basis for DNA recombination by continuous HJ branch migration. Branch migration allows RuvC to scan DNA until it finds its consensus sequence, where it cleaves and resolves cruciform DNA. This is Holliday junction branch migration complex subunit RuvB from Moorella thermoacetica (strain ATCC 39073 / JCM 9320).